The primary structure comprises 169 residues: Small ribosomal subunit protein uS5c (169 aa).

Residues 17–80 (WQERVIQVRR…TDGRKNLINI (64 aa)) form the S5 DRBM domain.

The protein belongs to the universal ribosomal protein uS5 family. As to quaternary structure, part of the 30S ribosomal subunit. Contacts protein S4.

Its subcellular location is the plastid. The protein resides in the chloroplast. With S4 and S12 plays an important role in translational accuracy. The sequence is that of Small ribosomal subunit protein uS5c (rps5) from Guillardia theta (Cryptophyte).